A 299-amino-acid chain; its full sequence is HTH-type transcriptional regulator CrgA (299 aa).

The HTH lysR-type domain occupies 1–60 (MKTNSEELTVFVQVVESGSFSRAAEQLAMANSAVSRIVKRLEEKLGVNLLNRTTRQLSLT). The segment at residues 20 to 39 (FSRAAEQLAMANSAVSRIVK) is a DNA-binding region (H-T-H motif).

Belongs to the LysR transcriptional regulatory family. As to quaternary structure, forms oligomers. Forms an octomeric ring-like structure in solution. May form hexadecamers when bound to target DNA.

Its activity is regulated as follows. Activation and repression activities are enhanced by the addition of alpha-methylene-gamma-butyrolactone (MBL), an inducer of NADPH:quinone oxidoreductase. Its function is as follows. Regulatory protein that activates transcription of mdaB, encoding a NADPH:quinone oxidoreductase, and represses its own transcription. Under the same experimental conditions, no regulation of transcription of pilus and capsule genes is detected. In Neisseria meningitidis serogroup B (strain ATCC BAA-335 / MC58), this protein is HTH-type transcriptional regulator CrgA.